A 507-amino-acid polypeptide reads, in one-letter code: Dihydrolipoyl dehydrogenase 2, mitochondrial (507 aa).

A mitochondrion-targeting transit peptide spans 1–36; that stretch reads MAMASLARRKAYFLTRNISNSPTDAFRFSFSLTRGF. Residues 73–82, Lys-91, Gly-155, and 184–186 each bind FAD; these read EKRGALGGTC and TGS. Cys-82 and Cys-87 are disulfide-bonded. NAD(+) contacts are provided by residues 221-228, Glu-244, Val-278, and Gly-313; that span reads GAGYIGLE. FAD is bound by residues Asp-354 and 360–363; that span reads MLAH. The active-site Proton acceptor is the His-486.

Belongs to the class-I pyridine nucleotide-disulfide oxidoreductase family. As to quaternary structure, homodimer. Part of both the glycine cleavage system composed of four proteins: P, T, L and H and of the pyruvate dehydrogenase complex containing multiple copies of three enzymatic components: pyruvate dehydrogenase (E1), dihydrolipoamide acetyltransferase (E2) and lipoamide dehydrogenase (E3). FAD is required as a cofactor. Post-translationally, S-nytrosylated at unknown positions. In terms of tissue distribution, preferentially expressed in roots, flowers and siliques and at a lower level in stems and leaves.

Its subcellular location is the mitochondrion matrix. It carries out the reaction N(6)-[(R)-dihydrolipoyl]-L-lysyl-[protein] + NAD(+) = N(6)-[(R)-lipoyl]-L-lysyl-[protein] + NADH + H(+). Its function is as follows. Lipoamide dehydrogenase is a component of the glycine decarboxylase (GDC) or glycine cleavage system as well as of the alpha-ketoacid dehydrogenase complexes. LPD1 is probably the protein most often associated with the glycine decarboxylase complex while LPD2 is probably incorporated into alpha-ketoacid dehydrogenase complexes. The sequence is that of Dihydrolipoyl dehydrogenase 2, mitochondrial (LPD2) from Arabidopsis thaliana (Mouse-ear cress).